The primary structure comprises 512 residues: Cytochrome P450 72A13 (512 aa).

The helical transmembrane segment at 2–22 (EISVASVTVSVAVVVVSWWVW) threads the bilayer. Heme is bound at residue Cys-460.

This sequence belongs to the cytochrome P450 family. Heme serves as cofactor.

It is found in the membrane. In Arabidopsis thaliana (Mouse-ear cress), this protein is Cytochrome P450 72A13 (CYP72A13).